Consider the following 142-residue polypeptide: Hemoglobin subunit alpha-1 (142 aa).

The region spanning 2 to 142 (VLSADDKSNV…VSTVLTSKYR (141 aa)) is the Globin domain. His59 lines the O2 pocket. His88 is a binding site for heme b.

The protein belongs to the globin family. In terms of assembly, heterotetramer of two alpha chains and two beta chains. Red blood cells.

Functionally, involved in oxygen transport from the lung to the various peripheral tissues. Its function is as follows. Hemopressin acts as an antagonist peptide of the cannabinoid receptor CNR1. Hemopressin-binding efficiently blocks cannabinoid receptor CNR1 and subsequent signaling. This is Hemoglobin subunit alpha-1 (HBA1) from Equus quagga burchellii (Burchell's zebra).